A 523-amino-acid chain; its full sequence is 2-isopropylmalate synthase (523 aa).

Positions 5-267 (VIIFDTTLRD…ETGINAKEIH (263 aa)) constitute a Pyruvate carboxyltransferase domain. The Mn(2+) site is built by Asp-14, His-202, His-204, and Asn-238. A regulatory domain region spans residues 392–523 (ELQQLVVHSD…QQNKQEFGSV (132 aa)).

Belongs to the alpha-IPM synthase/homocitrate synthase family. LeuA type 1 subfamily. Homodimer. Mn(2+) is required as a cofactor.

The protein localises to the cytoplasm. It carries out the reaction 3-methyl-2-oxobutanoate + acetyl-CoA + H2O = (2S)-2-isopropylmalate + CoA + H(+). It participates in amino-acid biosynthesis; L-leucine biosynthesis; L-leucine from 3-methyl-2-oxobutanoate: step 1/4. Catalyzes the condensation of the acetyl group of acetyl-CoA with 3-methyl-2-oxobutanoate (2-ketoisovalerate) to form 3-carboxy-3-hydroxy-4-methylpentanoate (2-isopropylmalate). This Shewanella halifaxensis (strain HAW-EB4) protein is 2-isopropylmalate synthase.